Reading from the N-terminus, the 279-residue chain is Ribosomal RNA small subunit methyltransferase J (279 aa).

S-adenosyl-L-methionine is bound by residues 138–139 (ER) and Asp-194.

The protein belongs to the methyltransferase superfamily. RsmJ family.

The protein localises to the cytoplasm. It carries out the reaction guanosine(1516) in 16S rRNA + S-adenosyl-L-methionine = N(2)-methylguanosine(1516) in 16S rRNA + S-adenosyl-L-homocysteine + H(+). Its function is as follows. Specifically methylates the guanosine in position 1516 of 16S rRNA. The protein is Ribosomal RNA small subunit methyltransferase J of Acinetobacter baumannii (strain ATCC 17978 / DSM 105126 / CIP 53.77 / LMG 1025 / NCDC KC755 / 5377).